Consider the following 237-residue polypeptide: 7-cyano-7-deazaguanine synthase (237 aa).

9–19 (YSGGLDSTTCL) contacts ATP. Cys-189, Cys-199, Cys-202, and Cys-205 together coordinate Zn(2+).

Belongs to the QueC family. Zn(2+) is required as a cofactor.

The catalysed reaction is 7-carboxy-7-deazaguanine + NH4(+) + ATP = 7-cyano-7-deazaguanine + ADP + phosphate + H2O + H(+). Its pathway is purine metabolism; 7-cyano-7-deazaguanine biosynthesis. Its function is as follows. Catalyzes the ATP-dependent conversion of 7-carboxy-7-deazaguanine (CDG) to 7-cyano-7-deazaguanine (preQ(0)). The polypeptide is 7-cyano-7-deazaguanine synthase (Geobacter metallireducens (strain ATCC 53774 / DSM 7210 / GS-15)).